Here is a 354-residue protein sequence, read N- to C-terminus: Protein-arginine kinase (354 aa).

Residues 24–254 (IVLSSRIRLA…QQIIQQEKMA (231 aa)) form the Phosphagen kinase C-terminal domain. Residues 27 to 31 (SSRIR), His92, Arg125, 176 to 180 (RASVM), and 207 to 212 (RGIYGE) each bind ATP. Residues 337–342 (RDYRRA) carry the RDXXRA motif of the pArg binding pocket involved in allosteric regulation motif.

This sequence belongs to the ATP:guanido phosphotransferase family.

It catalyses the reaction L-arginyl-[protein] + ATP = N(omega)-phospho-L-arginyl-[protein] + ADP + H(+). Its activity is regulated as follows. Appears to be allosterically activated by the binding of pArg-containing polypeptides to the pArg-binding pocket localized in the C-terminal domain of McsB. Its function is as follows. Catalyzes the specific phosphorylation of arginine residues in a large number of proteins. Is part of the bacterial stress response system. Protein arginine phosphorylation has a physiologically important role and is involved in the regulation of many critical cellular processes, such as protein homeostasis, motility, competence, and stringent and stress responses, by regulating gene expression and protein activity. The protein is Protein-arginine kinase of Bacillus anthracis (strain A0248).